The primary structure comprises 314 residues: MDMKASGHHKVAIIGSGNIGTDLMIKVMRHGRSLEMGAMVGIDAASDGLARAARLGVPTTAEGIDGLVGMPGFGDIRIAFDATSAGAHAHHNRVLQQHGVRVIDLTPASIGPYVVPVVNLDQHLDAPNINMVTCGGQATIPMVAAVSRVARVHYAEIVASISSRSAGPGTRANIDEFTETTSQALCSVGGAARGKAIIVLNPAEPPLMMRDTVFTLSEDGDEAEIAASVEAMAQAVQGYVPGYRLKQRVQFERIAASAPLNIPGLGPMSGLKTSIFLEVEGAAHYLPAYAGNLDIMTSAALACAERLAETRLSA.

16–19 (SGNI) contacts NAD(+). Cys134 (acyl-thioester intermediate) is an active-site residue. NAD(+) is bound by residues 165-173 (SAGPGTRAN) and Asn292.

The protein belongs to the acetaldehyde dehydrogenase family.

It catalyses the reaction acetaldehyde + NAD(+) + CoA = acetyl-CoA + NADH + H(+). This Cupriavidus necator (strain ATCC 17699 / DSM 428 / KCTC 22496 / NCIMB 10442 / H16 / Stanier 337) (Ralstonia eutropha) protein is Acetaldehyde dehydrogenase 1 (mhpF).